Consider the following 424-residue polypeptide: Probable methyltransferase EP424R (424 aa).

The region spanning 103–315 (QIVTNAWLKM…TYIVGKNRLR (213 aa)) is the Adrift-type SAM-dependent 2'-O-MTase domain. Residues glycine 135 and aspartate 228 each coordinate S-adenosyl-L-methionine. Lysine 268 serves as the catalytic Proton acceptor.

It localises to the virion. The chain is Probable methyltransferase EP424R from Ornithodoros (relapsing fever ticks).